The primary structure comprises 620 residues: MSQHKNRVGLLVSAVGVVFGDIGTSPLYALKETFSGHHPIPVNPENIFGVLSLVFWTVMLLVTVKYVIVIMRADNHGEGGSLALLALVTELTRGRRVHYPLMMLGVIAAALFYGDSMITPAISVLSAVEGLEVVTPDLRPYVVPITAVVLTALFAIQSRGTGLVGRLFGPVMCLWFITLAVLGIVNVINAPGVLKAISPTYAFEFVFRHPLMSFYALGSVVLAVTGGEALYTDMGHFGRFPIRLAWFCLVLPALLLNYFGQGALLIHDPSAIQNPFFRMGPEWMVVPLVALATFAAVIASQAVISGAYSVARQAIQLGLLPRMTIVHTSGEEAGQIYVPFTNWTLYLAVMALVVGFQSSSNLAAAYGIAVTSTMMIDTILVSFVMALLWRWNMALVITVVGTLLAVDIAFFSANIIKVAQGGWFPLFIGFISFTVLTTWRRGRALVRKQLKKQAVPLDVVLRALGPNVSRARGTAVFLTAATDGVPPALLHNLKHNQTVHQRVVLTTVTTAETPYVPDSERVHMTDIGDGFHRLIIRYGFMQTPDVPAALVLCKQFGHEFNMMSTSFFLSRETFVPSLNPGMALWRERLFSFMTLNATRATTFFKIPTDRVVELGTQLEI.

Transmembrane regions (helical) follow at residues 10–30 (LLVSAVGVVFGDIGTSPLYAL), 50–70 (VLSLVFWTVMLLVTVKYVIVI), 102–122 (MMLGVIAAALFYGDSMITPAI), 136–156 (PDLRPYVVPITAVVLTALFAI), 168–188 (FGPVMCLWFITLAVLGIVNVI), 211–231 (LMSFYALGSVVLAVTGGEALY), 246–266 (WFCLVLPALLLNYFGQGALLI), 284–304 (MVVPLVALATFAAVIASQAVI), 336–356 (IYVPFTNWTLYLAVMALVVGF), 368–388 (IAVTSTMMIDTILVSFVMALL), 393–413 (MALVITVVGTLLAVDIAFFSA), and 415–435 (IIKVAQGGWFPLFIGFISFTV).

Belongs to the HAK/KUP transporter (TC 2.A.72) family.

The protein resides in the cell inner membrane. The enzyme catalyses K(+)(in) + H(+)(in) = K(+)(out) + H(+)(out). Functionally, transport of potassium into the cell. Likely operates as a K(+):H(+) symporter. This is Probable potassium transport system protein Kup 2 from Rhodopseudomonas palustris (strain BisB5).